The primary structure comprises 766 residues: Leucine-rich repeat and fibronectin type III domain-containing protein 1 (766 aa).

Positions 1-31 (MAPGPFSSGLFSPPPAALPFLLLLWAGASRG) are cleaved as a signal peptide. The region spanning 32 to 65 (QPCPGRCICQNVAPTLTMLCAKTGLLFVPPAIDR) is the LRRNT domain. Residues 32-536 (QPCPGRCICQ…LRAHFLGGTM (505 aa)) lie on the Extracellular side of the membrane. LRR repeat units follow at residues 66-87 (RVVE…DFAN), 90-111 (SLVH…AFAD), 114-135 (ALRA…QLRG), 138-159 (NLRH…AFDA), 163-184 (TVED…AVGQ), 187-208 (NLNT…TFVQ), and 211-232 (KLVR…GLFL). Residue Asn-87 is glycosylated (N-linked (GlcNAc...) asparagine). One can recognise an LRRCT domain in the interval 252-298 (NPLHCNCELLWLRRLTREDDLETCATPEHLTDRYFWSIPEEEFLCEP). The Ig-like domain occupies 299-386 (PLITRQAGGR…GEATAPVEVC (88 aa)). Residues Cys-321 and Cys-370 are joined by a disulfide bond. N-linked (GlcNAc...) asparagine glycosylation is present at Asn-343. A disordered region spans residues 397–424 (PAAPPPLTEPGSSDIATPGRPGANDSTS). The Fibronectin type-III domain occupies 424–520 (SERRLVAAEL…GCVQFTTAGD (97 aa)). A helical transmembrane segment spans residues 537-557 (IIAIGGVIVASVLVFIVLLMI). Residues 558-766 (RYKVYGDGDS…STEWMLESTV (209 aa)) lie on the Cytoplasmic side of the membrane. 2 disordered regions span residues 568–601 (RRIK…PPAP) and 645–742 (LCLL…GEDG). Ser-713 is modified (phosphoserine). Over residues 714–727 (YPRRARRTKRHRST) the composition is skewed to basic residues. A PDZ-binding motif is present at residues 763-766 (ESTV).

It belongs to the LRFN family. Can form heteromeric complexes with LRFN2, LRFN3, LRFN4 and LRFN5. Forms homomeric complexes, but not across cell junctions. Interacts with DLG4. Also interacts with DLG1, DLG2, and DLG3. Interacts with 2 AMPA receptor subunits GRIA1 and GRIA2 and NMDA receptor subunit GRIN1. Post-translationally, glycosylated. In terms of tissue distribution, predominantly expressed in the brain, with a weak, but broad expression in the cerebral cortex and diencephalic nuclei. Also detected in other parts of the central nervous system, including the olfactory bulb, pons, cerebellum, and medulla oblongata, as well as in the peripheral nervous system, such as the ganglia of cranial nerves and the dorsal root ganglion during gestation.

The protein localises to the membrane. It is found in the synapse. The protein resides in the postsynaptic density membrane. Promotes neurite outgrowth in hippocampal neurons. Involved in the regulation and maintenance of excitatory synapses. Induces the clustering of excitatory postsynaptic proteins, including DLG4, DLGAP1, GRIA1 and GRIN1. This is Leucine-rich repeat and fibronectin type III domain-containing protein 1 (Lrfn1) from Mus musculus (Mouse).